Here is a 429-residue protein sequence, read N- to C-terminus: GTPase Obg (429 aa).

The Obg domain occupies 1 to 158; that stretch reads MFADSAKIFI…LNVTLELKVI (158 aa). In terms of domain architecture, OBG-type G spans 159 to 333; it reads ADVGLVGFPN…LLYYVSDLLK (175 aa). GTP contacts are provided by residues 165–172, 190–194, 212–215, 282–285, and 314–316; these read GFPNVGKS, FTTLN, DIPG, NKTD, and SAV. Mg(2+) is bound by residues Ser-172 and Thr-192. In terms of domain architecture, OCT spans 350 to 429; that stretch reads ENLVMSEPYT…MYGLEFDYYK (80 aa).

Belongs to the TRAFAC class OBG-HflX-like GTPase superfamily. OBG GTPase family. In terms of assembly, monomer. The cofactor is Mg(2+).

The protein resides in the cytoplasm. In terms of biological role, an essential GTPase which binds GTP, GDP and possibly (p)ppGpp with moderate affinity, with high nucleotide exchange rates and a fairly low GTP hydrolysis rate. Plays a role in control of the cell cycle, stress response, ribosome biogenesis and in those bacteria that undergo differentiation, in morphogenesis control. The polypeptide is GTPase Obg (Lachnoclostridium phytofermentans (strain ATCC 700394 / DSM 18823 / ISDg) (Clostridium phytofermentans)).